Consider the following 500-residue polypeptide: NAD(P)H-quinone oxidoreductase chain 4, chloroplastic (500 aa).

14 helical membrane passes run 4–24, 37–57, 87–107, 111–131, 134–154, 167–187, 208–228, 242–262, 272–292, 305–325, 330–350, 386–406, 416–436, and 462–482; these read FPWL…IFLL, LCIC…HFQL, IGPI…AWPV, AQLF…SFSS, LLLF…LLSM, FILY…GIGL, ALEV…LPII, HYST…YGLV, AHCL…IYAA, IAYS…SLSD, GAIL…FLAG, LALP…GIIT, ILIA…SLSM, and LFVS…PDFV.

Belongs to the complex I subunit 4 family.

It is found in the plastid. The protein localises to the chloroplast thylakoid membrane. It catalyses the reaction a plastoquinone + NADH + (n+1) H(+)(in) = a plastoquinol + NAD(+) + n H(+)(out). The enzyme catalyses a plastoquinone + NADPH + (n+1) H(+)(in) = a plastoquinol + NADP(+) + n H(+)(out). In Oenothera parviflora (Small-flowered evening primrose), this protein is NAD(P)H-quinone oxidoreductase chain 4, chloroplastic.